We begin with the raw amino-acid sequence, 86 residues long: Large ribosomal subunit protein bL31 (86 aa).

Positions 65 to 86 (YGMGSADSATSKETKESKKSDK) are disordered. Over residues 74-86 (TSKETKESKKSDK) the composition is skewed to basic and acidic residues.

The protein belongs to the bacterial ribosomal protein bL31 family. Type A subfamily. In terms of assembly, part of the 50S ribosomal subunit.

Binds the 23S rRNA. This Prochlorococcus marinus subsp. pastoris (strain CCMP1986 / NIES-2087 / MED4) protein is Large ribosomal subunit protein bL31.